We begin with the raw amino-acid sequence, 96 residues long: Guanyl-specific ribonuclease Sa (96 aa).

A disulfide bond links Cys-7 and Cys-96. The Proton acceptor role is filled by Glu-54. His-85 (proton donor) is an active-site residue.

It belongs to the ribonuclease N1/T1 family.

It is found in the secreted. It carries out the reaction [RNA] containing guanosine + H2O = an [RNA fragment]-3'-guanosine-3'-phosphate + a 5'-hydroxy-ribonucleotide-3'-[RNA fragment].. This chain is Guanyl-specific ribonuclease Sa (rnaSA), found in Kitasatospora aureofaciens (Streptomyces aureofaciens).